The primary structure comprises 197 residues: Imidazoleglycerol-phosphate dehydratase (197 aa).

It belongs to the imidazoleglycerol-phosphate dehydratase family.

It is found in the cytoplasm. It carries out the reaction D-erythro-1-(imidazol-4-yl)glycerol 3-phosphate = 3-(imidazol-4-yl)-2-oxopropyl phosphate + H2O. Its pathway is amino-acid biosynthesis; L-histidine biosynthesis; L-histidine from 5-phospho-alpha-D-ribose 1-diphosphate: step 6/9. This is Imidazoleglycerol-phosphate dehydratase from Pseudomonas syringae pv. syringae (strain B728a).